We begin with the raw amino-acid sequence, 514 residues long: Cilia- and flagella-associated protein 53 (514 aa).

2 coiled-coil regions span residues 91-148 and 203-474; these read IINI…RQDF and KLWE…REFE.

It belongs to the CFAP53 family. As to quaternary structure, microtubule inner protein component of sperm flagellar doublet microtubules. Interacts with PIERCE1 and PIERCE2; the interactions link outer dynein arms docking complex (ODA-DC) to the internal microtubule inner proteins (MIP) in cilium axoneme. Interacts with CCDC38. Interacts with CCDC42 and IFT88. Interacts with centriolar satellite proteins PIBF1/CEP90 and PCM1. Interacts with dyneins DNAIC1, DNAIC2 AND DNAH11 and with ODA-DC component ODAD4/TTC25. Expressed in skin fibroblasts (at protein level). Expressed in nasal respiratory epithelial cells (at protein level). Expressed in airway epithelial cells.

It is found in the cytoplasm. Its subcellular location is the cytoskeleton. The protein resides in the cilium axoneme. It localises to the flagellum axoneme. The protein localises to the microtubule organizing center. It is found in the centrosome. Its subcellular location is the centriole. The protein resides in the centriolar satellite. It localises to the spindle pole. The protein localises to the cell projection. It is found in the cilium. Functionally, microtubule inner protein (MIP) part of the dynein-decorated doublet microtubules (DMTs) in cilia axoneme, which is required for motile cilia beating. Regulates motility patterns of both 9+0 and 9+2 motile cilia through differential localization and recruitment of axonemal dynein components. Required for centriolar satellite integrity and non-motile cilium assembly. Required for motile cilium formation. Through its role in the beating of primary cilia, involved in the establishment of organ laterality during embryogenesis. Required for sperm flagellum biogenesis and is essential for male fertility. This is Cilia- and flagella-associated protein 53 from Homo sapiens (Human).